A 398-amino-acid chain; its full sequence is NADH-quinone oxidoreductase subunit D (398 aa).

The protein belongs to the complex I 49 kDa subunit family. As to quaternary structure, NDH-1 is composed of 14 different subunits. Subunits NuoB, C, D, E, F, and G constitute the peripheral sector of the complex.

It localises to the cell inner membrane. The catalysed reaction is a quinone + NADH + 5 H(+)(in) = a quinol + NAD(+) + 4 H(+)(out). Functionally, NDH-1 shuttles electrons from NADH, via FMN and iron-sulfur (Fe-S) centers, to quinones in the respiratory chain. The immediate electron acceptor for the enzyme in this species is believed to be ubiquinone. Couples the redox reaction to proton translocation (for every two electrons transferred, four hydrogen ions are translocated across the cytoplasmic membrane), and thus conserves the redox energy in a proton gradient. This is NADH-quinone oxidoreductase subunit D from Bradyrhizobium sp. (strain ORS 278).